We begin with the raw amino-acid sequence, 292 residues long: NAD kinase (292 aa).

The active-site Proton acceptor is the Asp73. Residues 73 to 74, 147 to 148, His158, Arg175, Asp177, 188 to 193, and Gln247 each bind NAD(+); these read DG, NE, and TAYSLS.

Belongs to the NAD kinase family. The cofactor is a divalent metal cation.

The protein resides in the cytoplasm. It catalyses the reaction NAD(+) + ATP = ADP + NADP(+) + H(+). In terms of biological role, involved in the regulation of the intracellular balance of NAD and NADP, and is a key enzyme in the biosynthesis of NADP. Catalyzes specifically the phosphorylation on 2'-hydroxyl of the adenosine moiety of NAD to yield NADP. The chain is NAD kinase from Shigella boydii serotype 4 (strain Sb227).